The chain runs to 362 residues: MKPSIYSLTRQEMIEWAEAQGEKKFRAAQIWEWLYRKRVQSFEEMTNLSKDLIAKLNDQFVVNPLKQRIVQESADGTVKYLFELPDGMLIETVLMRQHYGLSVCVTTQVGCNIGCTFCASGLIKKQRDLNNGEIVSQIMLVQKYFDERGQDERVSHIVVMGIGEPFDNYDNVLKFVRTVNDDKGLAIGARHITVSTSGLAHKIRDFANEGVQVNLAVSLHAPNNDLRTSIMRINRSFPIEKLFAAIEYYIETTNRRVTFEYIMLNEVNDGVEQAKELAELLKNIRKLSYVNLIPYNPVSEHDQYSRSPKERVMAFYDTLKKNGVNCVVRQEHGTDIDAACGQLRSNTMKRDREKALVENVQP.

Glutamate 91 acts as the Proton acceptor in catalysis. The Radical SAM core domain maps to 97 to 329; sequence QHYGLSVCVT…KKNGVNCVVR (233 aa). A disulfide bond links cysteine 104 and cysteine 340. 3 residues coordinate [4Fe-4S] cluster: cysteine 111, cysteine 115, and cysteine 118. Residues 163–164, serine 195, 218–220, and asparagine 296 each bind S-adenosyl-L-methionine; these read GE and SLH. Cysteine 340 functions as the S-methylcysteine intermediate in the catalytic mechanism.

Belongs to the radical SAM superfamily. RlmN family. [4Fe-4S] cluster serves as cofactor.

Its subcellular location is the cytoplasm. It carries out the reaction adenosine(2503) in 23S rRNA + 2 reduced [2Fe-2S]-[ferredoxin] + 2 S-adenosyl-L-methionine = 2-methyladenosine(2503) in 23S rRNA + 5'-deoxyadenosine + L-methionine + 2 oxidized [2Fe-2S]-[ferredoxin] + S-adenosyl-L-homocysteine. It catalyses the reaction adenosine(37) in tRNA + 2 reduced [2Fe-2S]-[ferredoxin] + 2 S-adenosyl-L-methionine = 2-methyladenosine(37) in tRNA + 5'-deoxyadenosine + L-methionine + 2 oxidized [2Fe-2S]-[ferredoxin] + S-adenosyl-L-homocysteine. Its function is as follows. Specifically methylates position 2 of adenine 2503 in 23S rRNA and position 2 of adenine 37 in tRNAs. The sequence is that of Probable dual-specificity RNA methyltransferase RlmN from Streptococcus gordonii (strain Challis / ATCC 35105 / BCRC 15272 / CH1 / DL1 / V288).